The chain runs to 202 residues: Na(+)-translocating NADH-quinone reductase subunit E (202 aa).

6 helical membrane-spanning segments follow: residues 11 to 31 (AIFVENMALAFFLGMCTFLAI), 35 to 55 (IEAATGLGIAVVVVLTVTVPV), 81 to 101 (FLGLLTYIGVIAAIVQIMEMV), 114 to 134 (GVFLPLITVNCAILGASLFMV), 144 to 164 (LVYGFGAGVGWALAIIALAGI), and 180 to 200 (LGITFITVGLMSLGFMSFSGI).

It belongs to the NqrDE/RnfAE family. In terms of assembly, composed of six subunits; NqrA, NqrB, NqrC, NqrD, NqrE and NqrF.

It localises to the cell inner membrane. The catalysed reaction is a ubiquinone + n Na(+)(in) + NADH + H(+) = a ubiquinol + n Na(+)(out) + NAD(+). In terms of biological role, NQR complex catalyzes the reduction of ubiquinone-1 to ubiquinol by two successive reactions, coupled with the transport of Na(+) ions from the cytoplasm to the periplasm. NqrA to NqrE are probably involved in the second step, the conversion of ubisemiquinone to ubiquinol. The sequence is that of Na(+)-translocating NADH-quinone reductase subunit E from Marinobacter nauticus (strain ATCC 700491 / DSM 11845 / VT8) (Marinobacter aquaeolei).